A 624-amino-acid polypeptide reads, in one-letter code: Kelch-like ECH-associated protein 1 (624 aa).

At Cys38 the chain carries S-(2-succinyl)cysteine. In terms of domain architecture, BTB spans 77–149 (CDVTLQVKYQ…AYTASISMGE (73 aa)). Arg135 participates in a covalent cross-link: N5-[4-(S-L-cysteinyl)-5-methyl-1H-imidazol-2-yl]-L-ornithine (Arg-Cys) (interchain with C-151 in KEAP1). Residue Cys151 is modified to S-(2,3-dicarboxypropyl)cysteine; alternate. The residue at position 151 (Cys151) is an S-(2-succinyl)cysteine; alternate. Cys151 carries the post-translational modification S-nitrosocysteine; alternate. Cys151 is covalently cross-linked (N5-[4-(S-L-cysteinyl)-5-methyl-1H-imidazol-2-yl]-L-ornithine (Cys-Arg) (interchain with R-135 in KEAP1)). Residues 184 to 286 (AIGIANFAEQ…TPNFLQMQLQ (103 aa)) form the BACK domain. Position 241 is an S-(2-succinyl)cysteine (Cys241). S-(2,3-dicarboxypropyl)cysteine occurs at positions 257 and 273. At Cys288 the chain carries S-(2,3-dicarboxypropyl)cysteine; alternate. S-(2-succinyl)cysteine; alternate is present on Cys288. At Cys319 the chain carries S-(2-succinyl)cysteine. Kelch repeat units follow at residues 327–372 (LIYT…VVGG), 373–423 (LLYA…VIDG), 424–470 (HIYA…VLNR), 471–517 (LLYA…VLHN), 518–564 (CIYA…VHQG), and 565–611 (RIYV…VTME). Cys434 bears the S-cGMP-cysteine mark. Cys613 bears the S-(2-succinyl)cysteine mark.

This sequence belongs to the KEAP1 family. As to quaternary structure, component of the BCR(KEAP1) E3 ubiquitin ligase complex, at least composed of 2 molecules of CUL3, 2 molecules of KEAP1, and RBX1. Interacts with NFE2L2/NRF2; the interaction is direct. Forms a ternary complex with NFE2L2/NRF2 and PGAM5. Interacts with (phosphorylated) SQSTM1/p62; the interaction is direct and inactivates the BCR(KEAP1) complex by sequestering it in inclusion bodies, promoting its degradation. Interacts with NFE2L1. Interacts with BPTF and PTMA. Interacts with MAP1LC3B. Interacts indirectly with ENC1. Interacts with SESN1 and SESN2. Interacts with HSP90AA1 and HSP90AB1. Interacts with PGCKA1; this interaction prevents the ubiquitination of KEAP1 by TRIM25, thus protecting KEAP1 from degradation. (Microbial infection) Interacts with ebolavirus protein VP24; this interaction activates transcription factor NFE2L2/NRF2 by blocking its interaction with KEAP1. Post-translationally, non-enzymatic covalent modifications of reactive cysteines by electrophile metabolites inactivate the BCR(KEAP1) complex. Accumulation of fumarate promotes the formation of cysteine S-succination (S-(2-succinyl)cysteine), leading to inactivate the BCR(KEAP1) complex and promote NFE2L2/NRF2 nuclear accumulation and activation. Nitric oxide-dependent 8-Nitro-cGMP formation promotes cysteine guanylation (S-cGMP-cysteine), leading to NFE2L2/NRF2 nuclear accumulation and activation. Itaconate, an anti-inflammatory metabolite generated in response to lipopolysaccharide, alkylates cysteines, activating NFE2L2/NRF2. Methylglyoxal, a reactive metabolite that accumulates when the glycolytic enzyme PGK1 is inhibited, promotes formation of a methylimidazole cross-link between proximal Cys-151 and Arg-135 on another KEAP1 molecule, resulting in an inactive dimer that inactivates the BCR(KEAP1) complex. In terms of processing, degraded via a proteasomal-independent process during selective autophagy: interaction with phosphorylated SQSTM1/p62 sequesters KEAP1 in inclusion bodies, leading to its degradation. Auto-ubiquitinated by the BCR(KEAP1) complex. Quinone-induced oxidative stress, but not sulforaphane, increases its ubiquitination. Ubiquitination and subsequent degradation is most pronounced following prolonged exposure of cells to oxidative stress, particularly in glutathione-deficient cells that are highly susceptible to oxidative stress. Deubiquitinated by USP25; leading to stabilization. Ubiquitinated by TRIM25; leading to degradation upon ER stress. In terms of tissue distribution, broadly expressed, with highest levels in skeletal muscle.

The protein localises to the cytoplasm. The protein resides in the nucleus. The protein operates within protein modification; protein ubiquitination. With respect to regulation, ubiquitin ligase activity of the BCR(KEAP1) complex is inhibited by oxidative stress and electrophile metabolites such as sulforaphane. Electrophile metabolites react with reactive cysteine residues in KEAP1 and trigger non-enzymatic covalent modifications of these cysteine residues, leading to inactivate the ubiquitin ligase activity of the BCR(KEAP1) complex. Selective autophagy also inactivates the BCR(KEAP1) complex via interaction between KEAP1 and SQSTM1/p62, which sequesters the complex in inclusion bodies and promotes its degradation. In terms of biological role, substrate-specific adapter of a BCR (BTB-CUL3-RBX1) E3 ubiquitin ligase complex that regulates the response to oxidative stress by targeting NFE2L2/NRF2 for ubiquitination. KEAP1 acts as a key sensor of oxidative and electrophilic stress: in normal conditions, the BCR(KEAP1) complex mediates ubiquitination and degradation of NFE2L2/NRF2, a transcription factor regulating expression of many cytoprotective genes. In response to oxidative stress, different electrophile metabolites trigger non-enzymatic covalent modifications of highly reactive cysteine residues in KEAP1, leading to inactivate the ubiquitin ligase activity of the BCR(KEAP1) complex, promoting NFE2L2/NRF2 nuclear accumulation and expression of phase II detoxifying enzymes. In response to selective autophagy, KEAP1 is sequestered in inclusion bodies following its interaction with SQSTM1/p62, leading to inactivation of the BCR(KEAP1) complex and activation of NFE2L2/NRF2. The BCR(KEAP1) complex also mediates ubiquitination of SQSTM1/p62, increasing SQSTM1/p62 sequestering activity and degradation. The BCR(KEAP1) complex also targets BPTF and PGAM5 for ubiquitination and degradation by the proteasome. This chain is Kelch-like ECH-associated protein 1, found in Homo sapiens (Human).